The following is a 237-amino-acid chain: MRDNIFTKENDLVNFAFDSQVANVFDDMVKRSVPAYQSMIEMISLSVKTYGQDNTNYYDLGASTGATSIALGINNPHSNNQIIALDNSPDMVKKCQQNLAGKIDNVDVICGDILDMKFENASIIVLNLTLQFIAPNNRQALINRIYKDLNTNGALIISEKIHFNDQQKQKQIAKLHLNFKRANGYSELEITNKRQSIENVLITDSKQTHFKRFNMAGFKNSICHFQCLNFVSFLAVK.

S-adenosyl-L-methionine contacts are provided by residues Y36, 61–63 (GAS), 86–87 (DN), 112–113 (DI), N127, and R194.

Belongs to the class I-like SAM-binding methyltransferase superfamily. Cx-SAM synthase family. As to quaternary structure, homodimer.

The enzyme catalyses prephenate + S-adenosyl-L-methionine = carboxy-S-adenosyl-L-methionine + 3-phenylpyruvate + H2O. In terms of biological role, catalyzes the conversion of S-adenosyl-L-methionine (SAM) to carboxy-S-adenosyl-L-methionine (Cx-SAM). The chain is Carboxy-S-adenosyl-L-methionine synthase from Ruthia magnifica subsp. Calyptogena magnifica.